Here is a 146-residue protein sequence, read N- to C-terminus: Lysozyme-like protein 4 (146 aa).

Positions 1 to 19 (MKASVVLSLLGYLVVPSGA) are cleaved as a signal peptide. Residues 20–146 (YILGRCTVAK…LARWLDGCKL (127 aa)) enclose the C-type lysozyme domain. Intrachain disulfides connect Cys-25–Cys-144, Cys-49–Cys-131, Cys-84–Cys-96, and Cys-92–Cys-110. Glu-54 is an active-site residue.

Belongs to the glycosyl hydrolase 22 family. As to quaternary structure, monomer. As to expression, expressed in testis and epididymis.

It is found in the secreted. It localises to the cytoplasmic vesicle. The protein localises to the secretory vesicle. The protein resides in the acrosome. Its subcellular location is the cell projection. It is found in the cilium. It localises to the flagellum. May be involved in fertilization. Has no detectable bacteriolytic and lysozyme activities in vitro. This chain is Lysozyme-like protein 4 (LYZL4), found in Homo sapiens (Human).